A 926-amino-acid chain; its full sequence is OTU domain-containing protein 7A (926 aa).

Positions 75–99 are disordered; sequence PHVFNEGRGPKQPEREPQPGHKVER. Basic and acidic residues predominate over residues 82–99; the sequence is RGPKQPEREPQPGHKVER. Phosphoserine is present on S119. A TRAF-binding region spans residues 168–410; sequence ERDLIEQATM…AVDPGKDWEW (243 aa). Positions 183–449 are catalytic; that stretch reads AGRLNWWSTV…VTWIRIPSET (267 aa). Residues 199–374 form the OTU domain; the sequence is LLPLATTGDG…QAHFSALVSM (176 aa). The active site involves D207. Residue C210 is the Nucleophile of the active site. H367 (proton acceptor) is an active-site residue. Disordered regions lie at residues 452–514, 537–613, and 668–768; these read PLAQ…DSVA, GLVH…DAWK, and EQEQ…APAR. The segment covering 481-491 has biased composition (low complexity); that stretch reads VCSNSNSNNGK. Residues 492-510 show a composition bias toward basic and acidic residues; that stretch reads NGKDKEKEKQRKEKDKTRA. The Nuclear localization signal signature appears at 494 to 509; sequence KDKEKEKQRKEKDKTR. Composition is skewed to low complexity over residues 576–592, 677–691, and 729–742; these read GASASTSPSEKTTPSPT, ATAAAAAAAAAAATA, and PAAGRAARAAAGGT. R880 carries the post-translational modification Omega-N-methylarginine. The A20-type zinc-finger motif lies at 884–919; it reads GPVQRRCQRENCAFYGRAETEHYCSYCYREELRRRR. Positions 890, 895, 907, and 910 each coordinate Zn(2+).

Belongs to the peptidase C64 family.

The protein localises to the cytoplasm. The protein resides in the nucleus. The catalysed reaction is Thiol-dependent hydrolysis of ester, thioester, amide, peptide and isopeptide bonds formed by the C-terminal Gly of ubiquitin (a 76-residue protein attached to proteins as an intracellular targeting signal).. Deubiquitinase, which cleaves 'Lys-11'-linked polyubiquitin chains. Might be required for PA28-20S proteasome assembly. In Homo sapiens (Human), this protein is OTU domain-containing protein 7A (OTUD7A).